We begin with the raw amino-acid sequence, 322 residues long: Probable arabinan endo-1,5-alpha-L-arabinosidase A (322 aa).

The first 19 residues, 1 to 19 (MYLPTLAASASLLVGVAHG), serve as a signal peptide directing secretion. The active-site Proton acceptor is Asp34. The active-site Proton donor is the Glu201.

This sequence belongs to the glycosyl hydrolase 43 family.

It is found in the secreted. It carries out the reaction Endohydrolysis of (1-&gt;5)-alpha-arabinofuranosidic linkages in (1-&gt;5)-arabinans.. Its pathway is glycan metabolism; L-arabinan degradation. Endo-1,5-alpha-L-arabinanase involved in degradation of pectin. Its preferred substrate is linear 1,5-alpha-L-arabinan. This chain is Probable arabinan endo-1,5-alpha-L-arabinosidase A (abnA), found in Emericella nidulans (strain FGSC A4 / ATCC 38163 / CBS 112.46 / NRRL 194 / M139) (Aspergillus nidulans).